Reading from the N-terminus, the 149-residue chain is Proline-rich acidic protein 1 (149 aa).

The N-terminal stretch at 1–20 (MKRFLLATCLVAALLWEAGA) is a signal peptide. Disordered stretches follow at residues 51–79 (EPLEKDNQLGPLLPEPKQKPAAAEEKRPD) and 97–122 (LQGPELDLDSIDHPMSDDVQDEEVPQ). Residues 66–79 (PKQKPAAAEEKRPD) show a composition bias toward basic and acidic residues.

Interacts with MTTP. Interacts with MAD1L1. In terms of tissue distribution, predominantly expressed in the intestinal epithelial cells than in the liver (at protein level). Abundantly expressed in the uterus during late pregnancy by uterus epithelial cells. After birth expression rapidly decreases and is no longer found in the uterus by the third day. Also highly expressed in the small intestine where it shows a proximal-distal graded expression.

It localises to the secreted. Its subcellular location is the endoplasmic reticulum. Lipid-binding protein which promotes lipid absorption by facilitating MTTP-mediated lipid transfer (mainly triglycerides and phospholipids) and MTTP-mediated apoB lipoprotein assembly and secretion. Protects the gastrointestinal epithelium from irradiation-induced apoptosis. May play an important role in maintaining normal growth homeostasis in epithelial cells. Involved in p53/TP53-dependent cell survival after DNA damage. The chain is Proline-rich acidic protein 1 (Prap1) from Mus musculus (Mouse).